Reading from the N-terminus, the 261-residue chain is Imidazole glycerol phosphate synthase subunit HisF (261 aa).

Residues D16 and D135 contribute to the active site.

It belongs to the HisA/HisF family. In terms of assembly, heterodimer of HisH and HisF.

It is found in the cytoplasm. It carries out the reaction 5-[(5-phospho-1-deoxy-D-ribulos-1-ylimino)methylamino]-1-(5-phospho-beta-D-ribosyl)imidazole-4-carboxamide + L-glutamine = D-erythro-1-(imidazol-4-yl)glycerol 3-phosphate + 5-amino-1-(5-phospho-beta-D-ribosyl)imidazole-4-carboxamide + L-glutamate + H(+). It participates in amino-acid biosynthesis; L-histidine biosynthesis; L-histidine from 5-phospho-alpha-D-ribose 1-diphosphate: step 5/9. In terms of biological role, IGPS catalyzes the conversion of PRFAR and glutamine to IGP, AICAR and glutamate. The HisF subunit catalyzes the cyclization activity that produces IGP and AICAR from PRFAR using the ammonia provided by the HisH subunit. The sequence is that of Imidazole glycerol phosphate synthase subunit HisF from Mycobacterium ulcerans (strain Agy99).